A 638-amino-acid polypeptide reads, in one-letter code: Threonine--tRNA ligase (638 aa).

Positions 1 to 61 constitute a TGS domain; it reads MPVVTLPDGS…EADAEVALVT (61 aa). The interval 242 to 533 is catalytic; sequence DHRKLGKALD…LTEHYAGQYP (292 aa). 3 residues coordinate Zn(2+): Cys333, His384, and His510.

It belongs to the class-II aminoacyl-tRNA synthetase family. Homodimer. It depends on Zn(2+) as a cofactor.

It localises to the cytoplasm. The enzyme catalyses tRNA(Thr) + L-threonine + ATP = L-threonyl-tRNA(Thr) + AMP + diphosphate + H(+). Its function is as follows. Catalyzes the attachment of threonine to tRNA(Thr) in a two-step reaction: L-threonine is first activated by ATP to form Thr-AMP and then transferred to the acceptor end of tRNA(Thr). Also edits incorrectly charged L-seryl-tRNA(Thr). The chain is Threonine--tRNA ligase from Methylococcus capsulatus (strain ATCC 33009 / NCIMB 11132 / Bath).